A 215-amino-acid polypeptide reads, in one-letter code: MIYLNNVILNDKTLPMCFNLNVKAGERVAIIGESGAGKSTLLNLIAGFEFPAQGEIWLNDKNHTRSAPYERPVSMLFQENNLFPHLTVQQNLALGIKPSLKLTALEQEKIEQAACSVGLGDYLERLPNSLSGGQKQRVALARCLLRDKPILLLDEPFSALDQKLRVEMLALIAKLCDEKDLTLLLVTHQPSELIGSIDQVLVVENGQISQLQKGV.

In terms of domain architecture, ABC transporter spans 2-215; it reads IYLNNVILND…GQISQLQKGV (214 aa). Position 32-39 (32-39) interacts with ATP; that stretch reads GESGAGKS.

The protein belongs to the ABC transporter superfamily. Thiamine importer (TC 3.A.1.19.1) family. As to quaternary structure, the complex is composed of two ATP-binding proteins (ThiQ), two transmembrane proteins (ThiP) and a solute-binding protein (ThiB).

It is found in the cell inner membrane. It carries out the reaction thiamine(out) + ATP + H2O = thiamine(in) + ADP + phosphate + H(+). In terms of biological role, part of the ABC transporter complex ThiBPQ involved in thiamine import. Responsible for energy coupling to the transport system. The polypeptide is Thiamine import ATP-binding protein ThiQ (Haemophilus influenzae (strain 86-028NP)).